The sequence spans 188 residues: Elongation factor P (188 aa).

Belongs to the elongation factor P family.

The protein localises to the cytoplasm. The protein operates within protein biosynthesis; polypeptide chain elongation. In terms of biological role, involved in peptide bond synthesis. Stimulates efficient translation and peptide-bond synthesis on native or reconstituted 70S ribosomes in vitro. Probably functions indirectly by altering the affinity of the ribosome for aminoacyl-tRNA, thus increasing their reactivity as acceptors for peptidyl transferase. The protein is Elongation factor P of Phytoplasma mali (strain AT).